The sequence spans 23 residues: Apolipophorin-3 (23 aa).

It belongs to the insect apolipophorin-3 family. Equilibrium between a soluble monomer and a bound lipoprotein form. Apolipophorin-3 associates with lipophorin during lipid loading until each particle contains 9 or 14 molecules of apolipophorin-3. In terms of tissue distribution, hemolymph.

Its subcellular location is the secreted. In terms of biological role, assists in the loading of diacylglycerol, generated from triacylglycerol stores in the fat body through the action of adipokinetic hormone, into lipophorin, the hemolymph lipoprotein. It increases the lipid carrying capacity of lipophorin by covering the expanding hydrophobic surface resulting from diacylglycerol uptake. It thus plays a critical role in the transport of lipids during flight in several species of insects. This is Apolipophorin-3 from Melanoplus sanguinipes (Migratory grasshopper).